The chain runs to 431 residues: 5-methylthioadenosine/S-adenosylhomocysteine deaminase (431 aa).

Residues H66 and H68 each contribute to the Zn(2+) site. E95, R147, and H185 together coordinate substrate. H212 contacts Zn(2+). Substrate contacts are provided by E215 and D300. D300 provides a ligand contact to Zn(2+).

The protein belongs to the metallo-dependent hydrolases superfamily. MTA/SAH deaminase family. Zn(2+) serves as cofactor.

It carries out the reaction S-adenosyl-L-homocysteine + H2O + H(+) = S-inosyl-L-homocysteine + NH4(+). The catalysed reaction is S-methyl-5'-thioadenosine + H2O + H(+) = S-methyl-5'-thioinosine + NH4(+). In terms of biological role, catalyzes the deamination of 5-methylthioadenosine and S-adenosyl-L-homocysteine into 5-methylthioinosine and S-inosyl-L-homocysteine, respectively. Is also able to deaminate adenosine. The polypeptide is 5-methylthioadenosine/S-adenosylhomocysteine deaminase (Acetivibrio thermocellus (strain ATCC 27405 / DSM 1237 / JCM 9322 / NBRC 103400 / NCIMB 10682 / NRRL B-4536 / VPI 7372) (Clostridium thermocellum)).